The sequence spans 296 residues: Light-inducible protein CPRF3 (296 aa).

Disordered regions lie at residues 1-27 (MSDGEEGTPMKHPKPASSVEEAPITTT), 98-165 (PNLA…GSLE), and 190-223 (RVNDERELKRQRRKQSNRESARRSRLRKQAKSDE). The span at 107 to 117 (VGRKISDEKGR) shows a compositional bias: basic and acidic residues. Positions 145-156 (SSSDNDCPSLSS) are enriched in low complexity. The bZIP domain maps to 196–259 (ELKRQRRKQS…AEVTSENHSI (64 aa)). The segment at 198-220 (KRQRRKQSNRESARRSRLRKQAK) is basic motif. The segment at 224-245 (LQERLDNLSKENRILRKNLQRI) is leucine-zipper.

The protein belongs to the bZIP family. As to quaternary structure, binds DNA as a dimer.

The protein resides in the nucleus. In terms of biological role, binds to the G-box-like motif (5'-ACGTGGC-3') of the chalcone synthase (CHS) gene promoter. G-box and G-box-like motifs are defined in promoters of certain plant genes which are regulated by such diverse stimuli as light-induction or hormone control. The polypeptide is Light-inducible protein CPRF3 (CPRF3) (Petroselinum crispum (Parsley)).